The chain runs to 355 residues: Protein RecA (355 aa).

67-74 (GPESSGKT) contacts ATP.

The protein belongs to the RecA family.

The protein localises to the cytoplasm. Can catalyze the hydrolysis of ATP in the presence of single-stranded DNA, the ATP-dependent uptake of single-stranded DNA by duplex DNA, and the ATP-dependent hybridization of homologous single-stranded DNAs. It interacts with LexA causing its activation and leading to its autocatalytic cleavage. The polypeptide is Protein RecA (Histophilus somni (strain 2336) (Haemophilus somnus)).